A 501-amino-acid polypeptide reads, in one-letter code: 2-phosphoxylose phosphatase 1 (501 aa).

The Cytoplasmic portion of the chain corresponds to 1–6; it reads MLLRNR. A helical; Signal-anchor for type II membrane protein transmembrane segment spans residues 7-27; sequence FLLLLALAGLLAFLSLSLQFF. The Lumenal segment spans residues 28 to 501; it reads SRWLPVSLQL…YYDACHQRLF (474 aa). The active-site Nucleophile is the histidine 120. 2 N-linked (GlcNAc...) asparagine glycosylation sites follow: asparagine 328 and asparagine 377. The Proton donor role is filled by aspartate 402. N-linked (GlcNAc...) asparagine glycosylation occurs at asparagine 488.

The protein belongs to the histidine acid phosphatase family.

The protein resides in the golgi apparatus membrane. The catalysed reaction is 3-O-[beta-D-GlcA-(1-&gt;3)-beta-D-Gal-(1-&gt;3)-beta-D-Gal-(1-&gt;4)-beta-D-2-O-P-Xyl]-L-seryl-[protein] + H2O = 3-O-(beta-D-GlcA-(1-&gt;3)-beta-D-Gal-(1-&gt;3)-beta-D-Gal-(1-&gt;4)-beta-D-Xyl)-L-seryl-[protein] + phosphate. Its function is as follows. Responsible for the 2-O-dephosphorylation of xylose in the glycosaminoglycan-protein linkage region of proteoglycans thereby regulating the amount of mature glycosaminoglycan (GAG) chains. Sulfated glycosaminoglycans (GAGs), including heparan sulfate and chondroitin sulfate, are synthesized on the so-called common GAG-protein linkage region (GlcUAbeta1-3Galbeta1-3Galbeta1-4Xylbeta1-O-Ser) of core proteins, which is formed by the stepwise addition of monosaccharide residues by the respective specific glycosyltransferases. Xylose 2-O-dephosphorylation during completion of linkage region formation is a prerequisite for the initiation and efficient elongation of the repeating disaccharide region of GAG chains. This is 2-phosphoxylose phosphatase 1 from Xenopus tropicalis (Western clawed frog).